The primary structure comprises 658 residues: DNA mismatch repair protein MutL (658 aa).

2 disordered regions span residues 114–137 (RQND…PTAA) and 437–456 (RFGN…PLSD). Polar residues predominate over residues 442-456 (PSETPAPQTDTPLSD).

Belongs to the DNA mismatch repair MutL/HexB family.

Its function is as follows. This protein is involved in the repair of mismatches in DNA. It is required for dam-dependent methyl-directed DNA mismatch repair. May act as a 'molecular matchmaker', a protein that promotes the formation of a stable complex between two or more DNA-binding proteins in an ATP-dependent manner without itself being part of a final effector complex. The sequence is that of DNA mismatch repair protein MutL from Neisseria meningitidis serogroup B (strain ATCC BAA-335 / MC58).